The primary structure comprises 189 residues: MKNFIKSFRLTLVFCVFFSVCYILVLWIFAQFAGPNSGNAEVVELNGKVVGAANVGQSFTEDIYFWGRPSCAGDGYDATSSAGSNKGPTNAEYLAEVEARIDTFLKHHPYLSRKEVPAEMVTASGSGLDPDITPDCAYVQVQRVAKARGMSEETVKAIVDKAVEKPFMGIFGTEKVNVLKLNAALEKAK.

Residues 10-30 (LTLVFCVFFSVCYILVLWIFA) traverse the membrane as a helical segment.

This sequence belongs to the KdpC family. In terms of assembly, the system is composed of three essential subunits: KdpA, KdpB and KdpC.

It localises to the cell inner membrane. Functionally, part of the high-affinity ATP-driven potassium transport (or Kdp) system, which catalyzes the hydrolysis of ATP coupled with the electrogenic transport of potassium into the cytoplasm. This subunit acts as a catalytic chaperone that increases the ATP-binding affinity of the ATP-hydrolyzing subunit KdpB by the formation of a transient KdpB/KdpC/ATP ternary complex. This Phocaeicola vulgatus (strain ATCC 8482 / DSM 1447 / JCM 5826 / CCUG 4940 / NBRC 14291 / NCTC 11154) (Bacteroides vulgatus) protein is Potassium-transporting ATPase KdpC subunit.